A 259-amino-acid chain; its full sequence is Ubiquinone biosynthesis protein COQ4 homolog, mitochondrial (259 aa).

Zn(2+) contacts are provided by His162, Asp163, His166, and Glu178.

This sequence belongs to the COQ4 family. Component of a multi-subunit COQ enzyme complex. Zn(2+) serves as cofactor.

It localises to the mitochondrion inner membrane. It carries out the reaction a 4-hydroxy-3-methoxy-5-(all-trans-polyprenyl)benzoate + H(+) = a 2-methoxy-6-(all-trans-polyprenyl)phenol + CO2. It participates in cofactor biosynthesis; ubiquinone biosynthesis. Lyase that catalyzes the C1-decarboxylation of 4-hydroxy-3-methoxy-5-(all-trans-polyprenyl)benzoic acid into 2-methoxy-6-(all-trans-polyprenyl)phenol during ubiquinone biosynthesis. The sequence is that of Ubiquinone biosynthesis protein COQ4 homolog, mitochondrial from Bombyx mori (Silk moth).